The chain runs to 441 residues: Damage-control phosphatase ARMT1 (441 aa).

An N-acetylalanine modification is found at alanine 2. Lysine 40 carries the post-translational modification N6-acetyllysine. The residue at position 102 (serine 102) is a Phosphoserine. Residues aspartate 253 and asparagine 254 each coordinate Mn(2+). 253-254 (DN) contacts substrate. S-adenosyl-L-methionine is bound by residues glutamate 258 and aspartate 291. Aspartate 291 lines the Mn(2+) pocket. Substrate-binding positions include 367–371 (DLNYR) and lysine 404. Residues 401-404 (RTLK) carry the Subfamily III RTxK motif motif.

The protein belongs to the damage-control phosphatase family. Sugar phosphate phosphatase III subfamily. It depends on Mn(2+) as a cofactor. The cofactor is Ni(2+). Post-translationally, automethylated.

It catalyses the reaction beta-D-fructose 1-phosphate + H2O = D-fructose + phosphate. It carries out the reaction beta-D-fructose 6-phosphate = dihydroxyacetone + D-glyceraldehyde 3-phosphate. The catalysed reaction is L-glutamyl-[protein] + S-adenosyl-L-methionine = [protein]-L-glutamate 5-O-methyl ester + S-adenosyl-L-homocysteine. In terms of biological role, metal-dependent phosphatase that shows phosphatase activity against several substrates, including fructose-1-phosphate and fructose-6-phosphate. Its preference for fructose-1-phosphate, a strong glycating agent that causes DNA damage rather than a canonical yeast metabolite, suggests a damage-control function in hexose phosphate metabolism. Has also been shown to have O-methyltransferase activity that methylates glutamate residues of target proteins to form gamma-glutamyl methyl ester residues. Possibly methylates PCNA, suggesting it is involved in the DNA damage response. In Homo sapiens (Human), this protein is Damage-control phosphatase ARMT1.